Here is a 605-residue protein sequence, read N- to C-terminus: DNA primase (605 aa).

A CHC2-type zinc finger spans residues 39 to 63 (CPFHHERTPSFHVVPDKKMYYCFGC). A Toprim domain is found at 257–338 (RAAIICEGYM…EVRIVELNGG (82 aa)). Mg(2+) contacts are provided by Glu-263, Asp-307, and Asp-309.

This sequence belongs to the DnaG primase family. Monomer. Interacts with DnaB. Requires Zn(2+) as cofactor. The cofactor is Mg(2+).

It catalyses the reaction ssDNA + n NTP = ssDNA/pppN(pN)n-1 hybrid + (n-1) diphosphate.. Its function is as follows. RNA polymerase that catalyzes the synthesis of short RNA molecules used as primers for DNA polymerase during DNA replication. The protein is DNA primase of Treponema pallidum (strain Nichols).